Here is a 105-residue protein sequence, read N- to C-terminus: ATP-dependent Clp protease adapter protein ClpS (105 aa).

The interval 1–27 (MVVMSAPTEPKSRPGTTGQRESAPEDV) is disordered.

The protein belongs to the ClpS family. Binds to the N-terminal domain of the chaperone ClpA.

Its function is as follows. Involved in the modulation of the specificity of the ClpAP-mediated ATP-dependent protein degradation. The chain is ATP-dependent Clp protease adapter protein ClpS from Mycolicibacterium paratuberculosis (strain ATCC BAA-968 / K-10) (Mycobacterium paratuberculosis).